A 198-amino-acid chain; its full sequence is Nucleoid occlusion factor SlmA (198 aa).

The region spanning 9–70 (RNRREEILQA…SLIEFIEDSL (62 aa)) is the HTH tetR-type domain. Residues 33 to 52 (TTAKLAANVGVSEAALYRHF) constitute a DNA-binding region (H-T-H motif). Residues 119–144 (DRLQGRINQLFERIEMQLRQVLREKK) adopt a coiled-coil conformation.

It belongs to the nucleoid occlusion factor SlmA family. In terms of assembly, homodimer. Interacts with FtsZ.

It is found in the cytoplasm. Its subcellular location is the nucleoid. Its function is as follows. Required for nucleoid occlusion (NO) phenomenon, which prevents Z-ring formation and cell division over the nucleoid. Acts as a DNA-associated cell division inhibitor that binds simultaneously chromosomal DNA and FtsZ, and disrupts the assembly of FtsZ polymers. SlmA-DNA-binding sequences (SBS) are dispersed on non-Ter regions of the chromosome, preventing FtsZ polymerization at these regions. The chain is Nucleoid occlusion factor SlmA from Yersinia pseudotuberculosis serotype I (strain IP32953).